A 297-amino-acid chain; its full sequence is Large ribosomal subunit protein uL18 (297 aa).

An N-acetylglycine modification is found at Gly-2. 2 positions are modified to N6-acetyllysine: Lys-5 and Lys-48. A Phosphoserine modification is found at Ser-185. Lys-220 bears the N6-acetyllysine; alternate mark. Residue Lys-220 forms a Glycyl lysine isopeptide (Lys-Gly) (interchain with G-Cter in SUMO1); alternate linkage. Residue Lys-220 forms a Glycyl lysine isopeptide (Lys-Gly) (interchain with G-Cter in SUMO2); alternate linkage. Thr-232 carries the post-translational modification Phosphothreonine. A disordered region spans residues 253-297; the sequence is YEKKPKREVKKKRWNRPKMSLAQKKDRVAQKKASFLRAQERAAES. Over residues 258-268 the composition is skewed to basic residues; that stretch reads KREVKKKRWNR. A Phosphoserine modification is found at Ser-272.

The protein belongs to the universal ribosomal protein uL18 family. In terms of assembly, component of the large ribosomal subunit (LSU). Part of the 5S RNP complex, which is a LSU subcomplex composed of the 5S RNA, RPL5 and RPL11. Component of a hexameric 5S RNP precursor complex, composed of 5S RNA, RRS1, RPF2/BXDC1, RPL5, RPL11 and HEATR3; this complex acts as a precursor for ribosome assembly. Interacts with NVL in an ATP-dependent manner. Interacts with RRP1B. Interacts with IPO5, IPO7 and KPNB1; these interactions may be involved in RPL5 nuclear import for the assembly of ribosomal subunits.

It localises to the cytoplasm. It is found in the nucleus. Its subcellular location is the nucleolus. Functionally, component of the ribosome, a large ribonucleoprotein complex responsible for the synthesis of proteins in the cell. The small ribosomal subunit (SSU) binds messenger RNAs (mRNAs) and translates the encoded message by selecting cognate aminoacyl-transfer RNA (tRNA) molecules. The large subunit (LSU) contains the ribosomal catalytic site termed the peptidyl transferase center (PTC), which catalyzes the formation of peptide bonds, thereby polymerizing the amino acids delivered by tRNAs into a polypeptide chain. The nascent polypeptides leave the ribosome through a tunnel in the LSU and interact with protein factors that function in enzymatic processing, targeting, and the membrane insertion of nascent chains at the exit of the ribosomal tunnel. As part of the 5S RNP/5S ribonucleoprotein particle it is an essential component of the LSU, required for its formation and the maturation of rRNAs. It also couples ribosome biogenesis to p53/TP53 activation. As part of the 5S RNP it accumulates in the nucleoplasm and inhibits MDM2, when ribosome biogenesis is perturbed, mediating the stabilization and the activation of TP53. The sequence is that of Large ribosomal subunit protein uL18 (Rpl5) from Mus musculus (Mouse).